The sequence spans 279 residues: Phosphate import ATP-binding protein PstB 2 (279 aa).

Residues 34-274 (FDIENLDLYY…PSDDRTRGYV (241 aa)) enclose the ABC transporter domain. Residue 66-73 (GPSGCGKS) coordinates ATP.

It belongs to the ABC transporter superfamily. Phosphate importer (TC 3.A.1.7) family. The complex is composed of two ATP-binding proteins (PstB), two transmembrane proteins (PstC and PstA) and a solute-binding protein (PstS).

It localises to the cell inner membrane. It catalyses the reaction phosphate(out) + ATP + H2O = ADP + 2 phosphate(in) + H(+). Part of the ABC transporter complex PstSACB involved in phosphate import. Responsible for energy coupling to the transport system. This chain is Phosphate import ATP-binding protein PstB 2, found in Vibrio vulnificus (strain YJ016).